The sequence spans 162 residues: Calcium vector protein (162 aa).

A2 bears the N-acetylalanine mark. 4 EF-hand domains span residues 12–47, 49–84, 86–121, and 123–158; these read EEKD…LGQT, TKRE…KWVR, DDEE…VGEE, and LTDA…SKNA. The residue at position 96 (K96) is an N6,N6,N6-trimethyllysine. Ca(2+)-binding residues include D99, N101, D103, and E110. Position 117 is an N6,N6,N6-trimethyllysine (K117). 4 residues coordinate Ca(2+): D136, D138, N140, and E147.

The protein resides in the cytoplasm. Its function is as follows. The exact function of this protein is not yet known. It interacts with CAVPT, a protein also of unknown function, in a calcium-dependent way. This protein binds two calcium ions. This is Calcium vector protein from Branchiostoma lanceolatum (Common lancelet).